A 236-amino-acid polypeptide reads, in one-letter code: MPPRELSEAEPPPLPASTPPPRRRSAPPELGIKCVLVGDGAVGKSSLIVSYTCNGYPARYRPTALDTFSVQVLVDGAPVRIELWDTAGQEDFDRLRSLCYPDTDVFLACFSVVQPSSFQNITEKWLPEIRTHNPQAPVLLVGTQADLRDDVNVLIQLDQGGREGPVPQPQAQGLAEKIRACCYLECSALTQKNLKEVFDSAILSAIEHKARLEKKLNAKGVRTLSRCRWKKFFCFV.

Residues 1–27 are disordered; the sequence is MPPRELSEAEPPPLPASTPPPRRRSAP. The segment covering 10-20 has biased composition (pro residues); that stretch reads EPPPLPASTPP. Ser25 is modified (phosphoserine). GTP contacts are provided by residues 38–45, 85–89, and 143–146; these read GDGAVGKS, DTAGQ, and TQAD. A lipid anchor (S-palmitoyl cysteine) is attached at Cys234.

It belongs to the small GTPase superfamily. Rho family. In terms of assembly, interacts with PAK2. It depends on Mg(2+) as a cofactor.

Its subcellular location is the cell membrane. It localises to the endosome membrane. In terms of biological role, plays a role in the control of the actin cytoskeleton via activation of the JNK pathway. This chain is Rho-related GTP-binding protein RhoV, found in Mus musculus (Mouse).